The chain runs to 385 residues: Methionine aminopeptidase 1 (385 aa).

The C6H2-type zinc-finger motif lies at 6 to 59 (TRVCETAGCSSEAKLQCPTCLKLGIQGSYFCSQECFKGSWATHKLLHKKAKDEK). Zn(2+) is bound by residues cysteine 9, cysteine 14, cysteine 22, cysteine 25, cysteine 36, cysteine 40, histidine 48, and histidine 52. Histidine 203 contacts a protein. The Zn(2+) site is built by aspartate 220, aspartate 231, and histidine 294. Histidine 301 is a binding site for a protein. Zn(2+) contacts are provided by glutamate 327 and glutamate 358.

This sequence belongs to the peptidase M24A family. Methionine aminopeptidase type 1 subfamily. Associates with the 60S ribosomal subunit of the 80S translational complex. The cofactor is Zn(2+). It depends on Co(2+) as a cofactor. Requires Mn(2+) as cofactor. Fe(2+) serves as cofactor.

The protein localises to the cytoplasm. The catalysed reaction is Release of N-terminal amino acids, preferentially methionine, from peptides and arylamides.. Its function is as follows. Cotranslationally removes the N-terminal methionine from nascent proteins. The N-terminal methionine is often cleaved when the second residue in the primary sequence is small and uncharged (Met-Ala-, Cys, Gly, Pro, Ser, Thr, or Val). The chain is Methionine aminopeptidase 1 (METAP1) from Gallus gallus (Chicken).